The following is a 135-amino-acid chain: Large ribosomal subunit protein eL32 (135 aa).

Residue lysine 9 forms a Glycyl lysine isopeptide (Lys-Gly) (interchain with G-Cter in SUMO2) linkage. At lysine 50 the chain carries N6-succinyllysine. Residue serine 62 is modified to Phosphoserine.

The protein belongs to the eukaryotic ribosomal protein eL32 family. Component of the large ribosomal subunit.

Its subcellular location is the cytoplasm. Functionally, component of the large ribosomal subunit. The ribosome is a large ribonucleoprotein complex responsible for the synthesis of proteins in the cell. The polypeptide is Large ribosomal subunit protein eL32 (RPL32) (Macaca fascicularis (Crab-eating macaque)).